The primary structure comprises 336 residues: Glyceraldehyde-3-phosphate dehydrogenase (336 aa).

Residues 12–13 (RI), D34, R78, and T121 contribute to the NAD(+) site. Residues 151–153 (SCT), T182, R199, 212–213 (TG), and R235 contribute to the D-glyceraldehyde 3-phosphate site. Residue C152 is the Nucleophile of the active site. N316 contacts NAD(+).

Belongs to the glyceraldehyde-3-phosphate dehydrogenase family. Homotetramer.

It localises to the cytoplasm. The enzyme catalyses D-glyceraldehyde 3-phosphate + phosphate + NAD(+) = (2R)-3-phospho-glyceroyl phosphate + NADH + H(+). Its pathway is carbohydrate degradation; glycolysis; pyruvate from D-glyceraldehyde 3-phosphate: step 1/5. Catalyzes the oxidative phosphorylation of glyceraldehyde 3-phosphate (G3P) to 1,3-bisphosphoglycerate (BPG) using the cofactor NAD. The first reaction step involves the formation of a hemiacetal intermediate between G3P and a cysteine residue, and this hemiacetal intermediate is then oxidized to a thioester, with concomitant reduction of NAD to NADH. The reduced NADH is then exchanged with the second NAD, and the thioester is attacked by a nucleophilic inorganic phosphate to produce BPG. This is Glyceraldehyde-3-phosphate dehydrogenase (gap) from Streptococcus dysgalactiae subsp. equisimilis (Streptococcus equisimilis).